Consider the following 486-residue polypeptide: N-succinylglutamate 5-semialdehyde dehydrogenase (486 aa).

Position 220 to 225 (220 to 225 (GSSRTG)) interacts with NAD(+). Residues Glu243 and Cys277 contribute to the active site.

It belongs to the aldehyde dehydrogenase family. AstD subfamily.

It carries out the reaction N-succinyl-L-glutamate 5-semialdehyde + NAD(+) + H2O = N-succinyl-L-glutamate + NADH + 2 H(+). It participates in amino-acid degradation; L-arginine degradation via AST pathway; L-glutamate and succinate from L-arginine: step 4/5. Functionally, catalyzes the NAD-dependent reduction of succinylglutamate semialdehyde into succinylglutamate. This Shewanella baltica (strain OS223) protein is N-succinylglutamate 5-semialdehyde dehydrogenase.